A 132-amino-acid polypeptide reads, in one-letter code: Large ribosomal subunit protein bL17 (132 aa).

This sequence belongs to the bacterial ribosomal protein bL17 family. Part of the 50S ribosomal subunit. Contacts protein L32.

This chain is Large ribosomal subunit protein bL17, found in Variovorax paradoxus (strain S110).